The primary structure comprises 1132 residues: Cytospin-A (1132 aa).

The disordered stretch occupies residues 1 to 166 (MKKAGRPVGN…SKSDGQLSDK (166 aa)). Composition is skewed to low complexity over residues 73-109 (STHS…SKES) and 119-129 (SRNSSSKKQSS). Basic and acidic residues predominate over residues 150-159 (SESRMSKSKS). Residues 226 to 268 (DVESTLLLLQEQNQAIRGELNLLKNENRMLKDRLNALGFSLEQ) adopt a coiled-coil conformation. The interval 301-381 (ASSVEGSAPG…RKGSSGNTSE (81 aa)) is disordered. Positions 333–343 (SEVYQAVTSSD) are enriched in polar residues. The segment covering 348 to 377 (APSGCGSSSSSESEGGPPACRSSSRKGSSG) has biased composition (low complexity). 2 coiled-coil regions span residues 385–440 (ACLT…MDSL) and 478–798 (RYME…RGRV). Disordered regions lie at residues 869 to 895 (TSTT…AAAV) and 939 to 1016 (SRPA…RKDP). Positions 875–889 (APLPRTPLSPSPMKT) are enriched in pro residues. Residues 946–961 (QRVSNMDTSKTITVSR) show a composition bias toward polar residues. A compositionally biased stretch (basic and acidic residues) spans 962–972 (RSSEEPKRDIS). A compositionally biased stretch (low complexity) spans 979–1000 (ASSLISMSSAAALSSSSSPTAS). The Calponin-homology (CH) domain occupies 1026–1131 (GSKRNALLRW…YVTSIYKYFE (106 aa)).

This sequence belongs to the cytospin-A family. As to quaternary structure, may interact with both microtubules and actin cytoskeleton.

Its subcellular location is the cytoplasm. It is found in the cytoskeleton. The protein localises to the spindle. The protein resides in the cell junction. It localises to the gap junction. Its function is as follows. Involved in cytokinesis and spindle organization. May play a role in actin cytoskeleton organization and microtubule stabilization and hence required for proper cell adhesion and migration. The polypeptide is Cytospin-A (specc1la) (Danio rerio (Zebrafish)).